Consider the following 394-residue polypeptide: Phosphoglycerate kinase (394 aa).

Substrate contacts are provided by residues 21–23 (DFN), R36, 59–62 (HLGR), R118, and R151. A Phosphoserine modification is found at S183. An ATP-binding site is contributed by K201. Position 299 is a phosphothreonine (T299). ATP-binding positions include E323 and 350–353 (GGDS).

This sequence belongs to the phosphoglycerate kinase family. Monomer.

The protein localises to the cytoplasm. The catalysed reaction is (2R)-3-phosphoglycerate + ATP = (2R)-3-phospho-glyceroyl phosphate + ADP. It participates in carbohydrate degradation; glycolysis; pyruvate from D-glyceraldehyde 3-phosphate: step 2/5. In Shouchella clausii (strain KSM-K16) (Alkalihalobacillus clausii), this protein is Phosphoglycerate kinase.